A 379-amino-acid polypeptide reads, in one-letter code: Dual-specificity RNA methyltransferase RlmN (379 aa).

The active-site Proton acceptor is glutamate 90. Residues 96 to 348 (EPSRGTLCVS…TTVRKTRGDD (253 aa)) form the Radical SAM core domain. Cysteine 103 and cysteine 353 form a disulfide bridge. Residues cysteine 110, cysteine 114, and cysteine 117 each coordinate [4Fe-4S] cluster. Residues 179–180 (GE), serine 211, 233–235 (SLH), and asparagine 310 each bind S-adenosyl-L-methionine. Cysteine 353 serves as the catalytic S-methylcysteine intermediate.

It belongs to the radical SAM superfamily. RlmN family. Requires [4Fe-4S] cluster as cofactor.

It localises to the cytoplasm. The catalysed reaction is adenosine(2503) in 23S rRNA + 2 reduced [2Fe-2S]-[ferredoxin] + 2 S-adenosyl-L-methionine = 2-methyladenosine(2503) in 23S rRNA + 5'-deoxyadenosine + L-methionine + 2 oxidized [2Fe-2S]-[ferredoxin] + S-adenosyl-L-homocysteine. The enzyme catalyses adenosine(37) in tRNA + 2 reduced [2Fe-2S]-[ferredoxin] + 2 S-adenosyl-L-methionine = 2-methyladenosine(37) in tRNA + 5'-deoxyadenosine + L-methionine + 2 oxidized [2Fe-2S]-[ferredoxin] + S-adenosyl-L-homocysteine. Functionally, specifically methylates position 2 of adenine 2503 in 23S rRNA and position 2 of adenine 37 in tRNAs. m2A2503 modification seems to play a crucial role in the proofreading step occurring at the peptidyl transferase center and thus would serve to optimize ribosomal fidelity. This is Dual-specificity RNA methyltransferase RlmN from Nitrosomonas europaea (strain ATCC 19718 / CIP 103999 / KCTC 2705 / NBRC 14298).